The primary structure comprises 499 residues: E3 ubiquitin-protein ligase TRIM69 (499 aa).

Positions 1–152 (MEVSSRPPSN…SMGQSKDFLQ (152 aa)) are necessary for nuclear localization. The segment at 41-82 (CPLCNDWFRDPLMLTCGHNFCQACIQNYWKMQAKETFCPECK) adopts an RING-type zinc-finger fold. Residues 160–265 (FTEELAIYQS…NIQARMEQQN (106 aa)) adopt a coiled-coil conformation. One can recognise a B30.2/SPRY domain in the interval 305–499 (PIQYTIWREM…KEPLHIVHPQ (195 aa)). The residue at position 341 (Ser341) is a Phosphoserine.

This sequence belongs to the TRIM/RBCC family. Homo-multimer; required for antiviral activity. Interacts with PML. In terms of processing, phosphorylated. Phosphorylation is necessary for nuclear localization.

The protein localises to the cytoplasm. The protein resides in the nucleus. Its subcellular location is the nucleus speckle. It is found in the cytoskeleton. It localises to the microtubule organizing center. The protein localises to the centrosome. It carries out the reaction S-ubiquitinyl-[E2 ubiquitin-conjugating enzyme]-L-cysteine + [acceptor protein]-L-lysine = [E2 ubiquitin-conjugating enzyme]-L-cysteine + N(6)-ubiquitinyl-[acceptor protein]-L-lysine.. It participates in protein modification; protein ubiquitination. Its function is as follows. E3 ubiquitin ligase that plays an important role in antiviral immunity by restricting different viral infections including dengue virus or vesicular stomatitis indiana virus. Ubiquitinates viral proteins such as dengue virus NS3 thereby limiting infection. In addition, acts as a key mediator of type I interferon induced microtubule stabilization by directly associating to microtubules independently of its E3 ligase activity. Also plays a role in cataract formation together with TP53. Mechanistically, inhibits UVB-induced cell apoptosis and reactive oxygen species (ROS) production by inducing TP53 ubiquitination. Regulates centrosome dynamics and mitotic progression by ubiquitinating STK3/MST2; leading to its redistribution to the perinuclear cytoskeleton and subsequent phosphorylation by PLK1. This Rattus norvegicus (Rat) protein is E3 ubiquitin-protein ligase TRIM69 (Trim69).